The following is a 424-amino-acid chain: Histidine--tRNA ligase (424 aa).

This sequence belongs to the class-II aminoacyl-tRNA synthetase family. As to quaternary structure, homodimer.

The protein localises to the cytoplasm. It catalyses the reaction tRNA(His) + L-histidine + ATP = L-histidyl-tRNA(His) + AMP + diphosphate + H(+). In Escherichia coli O139:H28 (strain E24377A / ETEC), this protein is Histidine--tRNA ligase.